A 1131-amino-acid chain; its full sequence is MGKFYYSNRRLACYAQATNRHLGGSFEQWLQCMEDSAFRAEVKARVQSEREEVRVRRLFSYPVGSGPAEDPRGVNWAYICLGTTAHWAGVPGDMVPPPEPVKAQEVVVQRSVGEDGRTGYRRQCLNIPNPPPMPKPYSRPIGAFAPTRSGFIRATVKRLTREREESRAAALFAELPLEYPQGAPLVVPRGFAAMRWTYHATWSRWYDTSDERALRTHPGGPALPPLPPPPPIQKPPSFEERLQAALHRQSCARAFALETSLGLNMAWVGMATIPSTSVCCADGRTTGGQTIAQEADPLTHRVSSNTAPGRAQWISERRSALRRREQANSLQGLAAQTDMTFEQARNAYLGAADMIEQGLPLLPPLRNAYAPRGLWRGPSTRANYTLDFRLNGIPTGENTLEILYNPVSDEEMEDYRDRGMSAVVIDALEIAINPFGMPGNPTDLTVVATYGHERNMERAFIGSSSTFLGNGLARAIFFPGLQYSQEEPRRESLIRLYVASTNATVDADSVLAAISVGTLRQHIGSLHSRTVASSVHAAQVQGTTLRATMMGNSVVVSPEGGLVSGVPEANVQIGGGSSMRMVGPLAWENVEEPGQTFSIRSRSRSVRVDRNADVGIAHPRMSTTTRGLAGRGTVPVPKDCQAGKYLKTLDLRDMVSGFSGIQYEKWITAGLVMPDFKVVIRYPANAFTGITWVMSFDAYNRITSSISTTASPAYTLSVPHWLLHHKNGTTSCDIDYGELCGHAMWFSATTFESPKLHFTCLTGNNKELAADWEFVVELYAEFEAAKSFLGKPNFIYSADAFNGSLKFLTIPPLEYDLSATSAYKSVSLLLGQTLVDGTHKVYNFNNTLLSYYLGIGGIVKGKVHVCSPCTYGIVLRVVSEWNGVTNNWNQLFKYPGCYIEEDGSFAIEIRSPYHRTPLRLIDAQSASSFTSTLNFYAISGPIAPSGETAKMPVVVQIEEIALPDLSVPSFPNDYFLWVDFSSFTVDVEEYVIGSRFFDISSTTSTVALGDNPFSHMIACHGLHHGILDLKLMWDLEGEFGKSSGGVTITKLCGDKATGMDGASRVCALQNMGCETELYIGNYAGANPNTALSLYSRWLAIKLDKAKSMKMLRILCKPRGNFEFYGRTCFKV.

A disordered region spans residues 213 to 236 (ALRTHPGGPALPPLPPPPPIQKPP). Residues 221 to 234 (PALPPLPPPPPIQK) show a composition bias toward pro residues.

Belongs to the nepoviruses RNA2 polyprotein family. Specific enzymatic cleavages in vivo by the P1 encoded 3C-like protease yield mature proteins.

It is found in the host cell junction. The protein localises to the host plasmodesma. Its subcellular location is the virion. Its function is as follows. Implicated in RNA2 replication. Could also be required for nematode transmission of the virus. Transports viral genome to neighboring plant cells directly through plasmosdesmata, without any budding. The movement protein allows efficient cell to cell propagation, by bypassing the host cell wall barrier. Acts by forming a tubular structure at the host plasmodesmata, enlarging it enough to allow free passage of virion capsids. The protein is RNA2 polyprotein of Vitis vinifera (Grape).